The following is a 134-amino-acid chain: Small ribosomal subunit protein uS9 (134 aa).

The disordered stretch occupies residues 109-134; it reads DARRTEPHKPSKSSKGPRAKRQKSYR. A compositionally biased stretch (basic residues) spans 118–134; the sequence is PSKSSKGPRAKRQKSYR.

It belongs to the universal ribosomal protein uS9 family.

In Methanococcus maripaludis (strain C7 / ATCC BAA-1331), this protein is Small ribosomal subunit protein uS9.